Here is a 1403-residue protein sequence, read N- to C-terminus: Envelopment polyprotein (1403 aa).

The N-terminal stretch at 1 to 17 (MLLNIVLISNLACLAFA) is a signal peptide. Residues 18–209 (LPLKEGTRGS…ELMIESFCTN (192 aa)) lie on the Lumenal side of the membrane. Asparagine 40 is a glycosylation site (N-linked (GlcNAc...) asparagine; by host). The chain crosses the membrane as a helical span at residues 210-230 (LELILLVTFILVGSVMMMILT). The Cytoplasmic portion of the chain corresponds to 231–314 (KTYIVYVFIP…PKTRKLCKSK (84 aa)). The helical transmembrane segment at 315–335 (ISNIVLCVITSLIFFSFITPI) threads the bilayer. Residues 336–361 (SSQCIDIEKLPDEYITCKRELANIKS) are Lumenal-facing. Residues 362-382 (LTIDDTYSFIYSCTCIIVLIL) form a helical membrane-spanning segment. Topologically, residues 383 to 448 (LKKAAKYILY…FKFESSYNRT (66 aa)) are cytoplasmic. The chain crosses the membrane as a helical span at residues 449 to 469 (GLIIFMLLLVPTIVMTQETSI). Residues 470-1361 (NCKNIQSTQL…GNLSFYWRLT (892 aa)) lie on the Lumenal side of the membrane. Cysteine 471 and cysteine 487 are disulfide-bonded. N-linked (GlcNAc...) asparagine; by host glycosylation occurs at asparagine 493. Cystine bridges form between cysteine 523–cysteine 550, cysteine 580–cysteine 589, and cysteine 591–cysteine 598. N-linked (GlcNAc...) asparagine; by host glycans are attached at residues asparagine 686 and asparagine 1353. A helical membrane pass occupies residues 1362–1382 (IYIIISLIMLILFLYILIPLC). Residues 1383 to 1403 (KRLKGLLEYNERIYQMENKFK) are Cytoplasmic-facing.

It belongs to the nairovirus envelope glycoprotein family. In terms of assembly, heterodimer with glycoprotein C; in prefusion state. Heterodimer with glycoprotein N; in prefusion state. Homotrimeric; in postfusion state. Specific enzymatic cleavage by host MBTPS1/S1P/SKI-1 endopeptidase yield glycoprotein N. Specific enzymatic cleavages by host furin-like protease and MBTPS1/S1P endopeptidase yield GP38. Post-translationally, glycosylated.

The protein resides in the host endoplasmic reticulum membrane. The protein localises to the virion membrane. It localises to the host Golgi apparatus membrane. Its function is as follows. Glycoprotein C and glycoprotein N interact with each other and are present at the surface of the virion. Glycoprotein N probably locks the Gn-Gc complex in a prefusion state. Glycoprotein N and glycoprotein C are able to attach the virion to host cell receptors. This attachment induces virion internalization predominantly through clathrin-dependent endocytosis. In terms of biological role, glycoprotein C and glycoprotein N interact with each other and are present at the surface of the virion. The spikes at the surface of the virion are formed by an N-terminal extension of glycoprotein C. Glycoprotein N and glycoprotein C are able to attach the virion to host cell receptors. This attachment induces virion internalization predominantly through clathrin-dependent endocytosis. Class II fusion protein that promotes fusion of viral membrane with host endosomal membrane after endocytosis of the virion. Exposure to potassium is necessary for the conformational change leading to fusion. The chain is Envelopment polyprotein (GP) from Bos taurus (Bovine).